A 302-amino-acid chain; its full sequence is Sulfate adenylyltransferase subunit 2 (302 aa).

The disordered stretch occupies residues 279 to 302 (ERQGRAIDHDQSGSMELKKRQGYF). The segment covering 280-302 (RQGRAIDHDQSGSMELKKRQGYF) has biased composition (basic and acidic residues).

This sequence belongs to the PAPS reductase family. CysD subfamily. In terms of assembly, heterodimer composed of CysD, the smaller subunit, and CysN.

The enzyme catalyses sulfate + ATP + H(+) = adenosine 5'-phosphosulfate + diphosphate. It functions in the pathway sulfur metabolism; hydrogen sulfide biosynthesis; sulfite from sulfate: step 1/3. Functionally, with CysN forms the ATP sulfurylase (ATPS) that catalyzes the adenylation of sulfate producing adenosine 5'-phosphosulfate (APS) and diphosphate, the first enzymatic step in sulfur assimilation pathway. APS synthesis involves the formation of a high-energy phosphoric-sulfuric acid anhydride bond driven by GTP hydrolysis by CysN coupled to ATP hydrolysis by CysD. The polypeptide is Sulfate adenylyltransferase subunit 2 (Photobacterium profundum (strain SS9)).